Here is a 371-residue protein sequence, read N- to C-terminus: MKEELTILRKFEHIEHCLKRNVEAHVSNGFEDVYFVHKSLPEIDKDEIDLTVEFLGRKFDYPIMITGMTGGTRREEIAGKINRTLAMAAEELNIPFGVGSQRAMIEKPETWESYYVRDVAPDIFLIGNLGAPQFGKNAKKRYSVKEVLYAIEKIEADAIAIHMNPLQESVQPEGDTTYAGVLEALAEIKSSINYPVIAKETGAGVSKEVAIELESVGIDAIDISGLGGTSWSAVEYYRAKDSEKRKIALKFWDWGIKTAISLAEVRWATNLPIIASGGMRDGVMMAKALAMGASLVGIALPVLRPAARGDVEGVVRIIRGYAEEIKNVMFLVGARNIRELRRVPLVITGFVREWLLQRIDLNSYLRSRFKH.

9-10 (RK) serves as a coordination point for substrate. Residues threonine 66, 67-69 (GMT), serine 100, and asparagine 128 contribute to the FMN site. 100 to 102 (SQR) lines the substrate pocket. Glutamine 167 provides a ligand contact to substrate. Glutamate 168 lines the Mg(2+) pocket. FMN-binding positions include lysine 199, serine 224, threonine 229, 278-280 (GMR), and 299-300 (AL).

It belongs to the IPP isomerase type 2 family. In terms of assembly, homooctamer. Dimer of tetramers. Requires FMN as cofactor. The cofactor is NADPH. Mg(2+) serves as cofactor.

It is found in the cytoplasm. It catalyses the reaction isopentenyl diphosphate = dimethylallyl diphosphate. Involved in the biosynthesis of isoprenoids. Catalyzes the 1,3-allylic rearrangement of the homoallylic substrate isopentenyl (IPP) to its allylic isomer, dimethylallyl diphosphate (DMAPP). This Pyrococcus horikoshii (strain ATCC 700860 / DSM 12428 / JCM 9974 / NBRC 100139 / OT-3) protein is Isopentenyl-diphosphate delta-isomerase.